The following is a 462-amino-acid chain: Indoleacetamide hydrolase (462 aa).

Residues Lys-74 and Ser-149 each act as charge relay system in the active site. Ser-173 functions as the Acyl-ester intermediate in the catalytic mechanism.

The protein belongs to the amidase family.

The protein operates within plant hormone metabolism; auxin biosynthesis. In terms of biological role, hydrolyzes indole-3-acetamide (IAM) into indole-3-acetic acid (IAA). This Allorhizobium ampelinum (strain ATCC BAA-846 / DSM 112012 / S4) (Agrobacterium vitis (strain S4)) protein is Indoleacetamide hydrolase (iaaH).